Consider the following 207-residue polypeptide: SPRY domain-containing protein 4 (207 aa).

Residues 12–207 (YRWGTKRWGV…HSGLEVPKGL (196 aa)) form the B30.2/SPRY domain. N6-acetyllysine occurs at positions 53 and 130. An N6-succinyllysine modification is found at Lys139.

This is SPRY domain-containing protein 4 (Spryd4) from Mus musculus (Mouse).